The following is a 249-amino-acid chain: MRGKTMGVKVKLLEYTPNPEKVVASAAKLCYSPVGVEEMAKDLSEEKVNKFLNMLMSYGHESPIEHVSFTFAAEGVSRSLTHQLVRHRIASYSQQSQRYVKLDQFQYIIPPEIDKDNNTRSIFIEAMENSQKAYDKIASTLEQKYISEGMKRKEAEKKAIEDARYVFPNACETKIIFTMNARTLMNFFRHRCCTRAQWEIRNLANEMLSEVKKVAPNLFKYSGPSCVNGNCPEGAMSCGKAAEMKKIYL.

In terms of domain architecture, ThyX spans 8-225 (VKVKLLEYTP…PNLFKYSGPS (218 aa)). Residues Ser-62, 86 to 88 (RHR), and Gln-94 each bind FAD. DUMP-binding positions include 83–86 (QLVR), 94–98 (QQSQR), and Arg-164. A ThyX motif motif is present at residues 86–96 (RHRIASYSQQS). FAD is bound by residues 180–182 (NAR) and Asn-186. Arg-191 is a binding site for dUMP. The Involved in ionization of N3 of dUMP, leading to its activation role is filled by Arg-191.

It belongs to the thymidylate synthase ThyX family. As to quaternary structure, homotetramer. Requires FAD as cofactor.

It carries out the reaction dUMP + (6R)-5,10-methylene-5,6,7,8-tetrahydrofolate + NADPH + H(+) = dTMP + (6S)-5,6,7,8-tetrahydrofolate + NADP(+). It participates in pyrimidine metabolism; dTTP biosynthesis. Functionally, catalyzes the reductive methylation of 2'-deoxyuridine-5'-monophosphate (dUMP) to 2'-deoxythymidine-5'-monophosphate (dTMP) while utilizing 5,10-methylenetetrahydrofolate (mTHF) as the methyl donor, and NADPH and FADH(2) as the reductant. This is Flavin-dependent thymidylate synthase from Clostridium tetani (strain Massachusetts / E88).